The sequence spans 223 residues: UPF0173 metal-dependent hydrolase TV0864 (223 aa).

Belongs to the UPF0173 family.

The chain is UPF0173 metal-dependent hydrolase TV0864 from Thermoplasma volcanium (strain ATCC 51530 / DSM 4299 / JCM 9571 / NBRC 15438 / GSS1).